Reading from the N-terminus, the 283-residue chain is 4-diphosphocytidyl-2-C-methyl-D-erythritol kinase (283 aa).

The active site involves Lys10. Position 99–109 (99–109 (PMGGGLGGGSS)) interacts with ATP. Asp141 is an active-site residue.

It belongs to the GHMP kinase family. IspE subfamily. As to quaternary structure, homodimer.

The catalysed reaction is 4-CDP-2-C-methyl-D-erythritol + ATP = 4-CDP-2-C-methyl-D-erythritol 2-phosphate + ADP + H(+). It participates in isoprenoid biosynthesis; isopentenyl diphosphate biosynthesis via DXP pathway; isopentenyl diphosphate from 1-deoxy-D-xylulose 5-phosphate: step 3/6. Its function is as follows. Catalyzes the phosphorylation of the position 2 hydroxy group of 4-diphosphocytidyl-2C-methyl-D-erythritol. The protein is 4-diphosphocytidyl-2-C-methyl-D-erythritol kinase of Escherichia coli (strain 55989 / EAEC).